The primary structure comprises 441 residues: Baicalein 7-O-glucuronosyltransferase (441 aa).

The protein belongs to the UDP-glycosyltransferase family. As to quaternary structure, homodimer.

The catalysed reaction is baicalein + UDP-alpha-D-glucuronate = baicalin + UDP. Inhibited by copper, zinc and iron, p-Chloromercuri-benzoic acid (PCMBA) and 4,4'-diisothiocyanostilbene-2,2'-disulfonic acid (DIDS), but not by N-ethylmaleimide (NEM), dithioerythritol (DTE), calcium or magnesium. Functionally, involved in the production of glucuronosylated baicalein, a flavonoid that shows antiallergic, anti-HIV and antitumor activities. Can use baicalein, scutellarein and wogonin as substrates, but not chrysin, apigenin, luteolin, quercetin, formononetin and daidzein. Highly specific for UDP-glucuronate (UDP-GlcUA) and no activity with UDP-glucose or UDP-galacturonic acid. The protein is Baicalein 7-O-glucuronosyltransferase (UBGAT-I) of Scutellaria baicalensis (Baical skullcap).